Here is an 895-residue protein sequence, read N- to C-terminus: Pentatricopeptide repeat-containing protein At1g74600, chloroplastic (895 aa).

The N-terminal 71 residues, 1 to 71 (MNCLANESLN…CNLRTTKILQ (71 aa)), are a transit peptide targeting the chloroplast. PPR repeat units follow at residues 83-113 (DVFL…IPQP), 114-148 (DVVS…GFEA), 149-183 (NEIS…GYFF), 184-214 (YEVV…SLSA), 215-249 (NVYC…FQKP), 250-280 (DSYT…VIKC), 284-314 (DVFV…IPNP), 315-349 (SVVS…GVEI), 350-384 (NNCT…GFYL), 385-415 (DSSV…LDDI), 417-451 (RQNI…GLRT), 452-483 (DEFS…GLVL), 484-514 (DLTV…IPFK), 515-549 (DNAC…GTSP), 550-584 (DEST…GIDK), 585-615 (GMDL…LPEL), 616-650 (DPVS…GFTM), 651-685 (DSFA…GLCT), 686-716 (EPSV…INGP), 717-751 (DLIA…GFKP), 752-787 (DKVT…GIEP), and 788-818 (ENRH…MHIK). The type E motif; degenerate stretch occupies residues 824 to 895 (WGTLLAACKI…VQKEPGWSSV (72 aa)).

It belongs to the PPR family. PCMP-E subfamily.

It is found in the plastid. The protein localises to the chloroplast. The chain is Pentatricopeptide repeat-containing protein At1g74600, chloroplastic (PCMP-E69) from Arabidopsis thaliana (Mouse-ear cress).